An 83-amino-acid chain; its full sequence is Transmembrane protein EP84R (83 aa).

Helical transmembrane passes span 31 to 51 (IIGV…IIIL) and 59 to 79 (TGSI…FLIY).

The protein belongs to the asfivirus EP84R family.

It localises to the virion membrane. In Ornithodoros (relapsing fever ticks), this protein is Transmembrane protein EP84R.